The primary structure comprises 363 residues: Spermidine/putrescine import ATP-binding protein PotA (363 aa).

The region spanning 4 to 234 is the ABC transporter domain; the sequence is LELRNVIRRF…PANRFIADFI (231 aa). Residue 36–43 participates in ATP binding; sequence GPSGCGKT.

It belongs to the ABC transporter superfamily. Spermidine/putrescine importer (TC 3.A.1.11.1) family. The complex is composed of two ATP-binding proteins (PotA), two transmembrane proteins (PotB and PotC) and a solute-binding protein (PotD).

It localises to the cell inner membrane. It carries out the reaction ATP + H2O + polyamine-[polyamine-binding protein]Side 1 = ADP + phosphate + polyamineSide 2 + [polyamine-binding protein]Side 1.. Functionally, part of the ABC transporter complex PotABCD involved in spermidine/putrescine import. Responsible for energy coupling to the transport system. This is Spermidine/putrescine import ATP-binding protein PotA from Nitrosomonas eutropha (strain DSM 101675 / C91 / Nm57).